Reading from the N-terminus, the 362-residue chain is MRLPELRQRLRDHGAAPCHAGRVLRAWVAGRPLDNRRQRAEDFLPLRLRNALPGLFDELRNLAQVHSEHPGEDGSARLLVRLADGQTVESVLLPRDGVCVSTQVGCAVGCVFCMTGRAGLLRQLSGAEIVAQVVLARSRRPVRKVVFMGMGEPAHNLDNVLDAIELLGLEGGIGHKNLVFSTVGDRRVFERLPQSTVKPARALSLHTTDRALRRRLLPRAPDIAPQELVELGEAYARRTGYPIQYQWTLLEGINDTEAELEGIARLLAGRYAVMNLIPYNATEADGFNRPSWARAAEMARRLHRRGVLAKLRHSAGQDVDGGCGQLRARALDAAPVLARRPLPSAETPAASPKAAASIGFPG.

The Proton acceptor role is filled by Glu89. The 227-residue stretch at 92–318 (LLPRDGVCVS…AKLRHSAGQD (227 aa)) folds into the Radical SAM core domain. A disulfide bond links Cys99 and Cys323. Residues Cys106, Cys110, and Cys113 each coordinate [4Fe-4S] cluster. S-adenosyl-L-methionine is bound by residues 151–152 (GE), Ser181, 204–206 (SLH), and Asn280. Residue Cys323 is the S-methylcysteine intermediate of the active site. Residues 342-362 (LPSAETPAASPKAAASIGFPG) form a disordered region. Over residues 343 to 362 (PSAETPAASPKAAASIGFPG) the composition is skewed to low complexity.

It belongs to the radical SAM superfamily. RlmN family. [4Fe-4S] cluster is required as a cofactor.

The protein resides in the cytoplasm. This chain is Probable RNA methyltransferase Tbd_1951, found in Thiobacillus denitrificans (strain ATCC 25259 / T1).